The primary structure comprises 262 residues: Acyl-[acyl-carrier-protein]--UDP-N-acetylglucosamine O-acyltransferase (262 aa).

Belongs to the transferase hexapeptide repeat family. LpxA subfamily. In terms of assembly, homotrimer.

It localises to the cytoplasm. It catalyses the reaction a (3R)-hydroxyacyl-[ACP] + UDP-N-acetyl-alpha-D-glucosamine = a UDP-3-O-[(3R)-3-hydroxyacyl]-N-acetyl-alpha-D-glucosamine + holo-[ACP]. It participates in glycolipid biosynthesis; lipid IV(A) biosynthesis; lipid IV(A) from (3R)-3-hydroxytetradecanoyl-[acyl-carrier-protein] and UDP-N-acetyl-alpha-D-glucosamine: step 1/6. Its function is as follows. Involved in the biosynthesis of lipid A, a phosphorylated glycolipid that anchors the lipopolysaccharide to the outer membrane of the cell. The polypeptide is Acyl-[acyl-carrier-protein]--UDP-N-acetylglucosamine O-acyltransferase (Klebsiella pneumoniae (strain 342)).